The chain runs to 340 residues: tRNA dimethylallyltransferase (340 aa).

The disordered stretch occupies residues 1–25; the sequence is MDQNRSPNGRDCREPPSPSSTARPG. ATP is bound at residue 31–38; sequence GPTATGKS. 33-38 is a binding site for substrate; sequence TATGKS. Positions 56 to 59 are interaction with substrate tRNA; sequence DSRQ.

The protein belongs to the IPP transferase family. As to quaternary structure, monomer. It depends on Mg(2+) as a cofactor.

The catalysed reaction is adenosine(37) in tRNA + dimethylallyl diphosphate = N(6)-dimethylallyladenosine(37) in tRNA + diphosphate. Its function is as follows. Catalyzes the transfer of a dimethylallyl group onto the adenine at position 37 in tRNAs that read codons beginning with uridine, leading to the formation of N6-(dimethylallyl)adenosine (i(6)A). This chain is tRNA dimethylallyltransferase, found in Synechococcus sp. (strain JA-3-3Ab) (Cyanobacteria bacterium Yellowstone A-Prime).